The sequence spans 318 residues: MSIVEEPYLQLIRDILEKGHEKSDRTGTGTKSLFGYQMRFNLAEGFPLLTTKKVPFGLIKSELLWFLRGDTNIRFLLEHNNHIWDEWAFKNWVESDEYHGPDMTNFGLRAQEDDNFNKVYQDEKKKFCQKIVEDQEFANKFGNLGDVYGAQWRHWQTRNGETIDQIKDVIETIKNNPDSRRMIVTAWNPEDVPLSALPPCHTLFQFYVNDGKLSCQLYQRSADVFLGVPFNIASYALLTHMIARETGLEVGEFVHTLGDAHIYLNHLDQVNEQLQRKPNDAPTLWLNPEKKNIMDFEMEDIKVKNYHSHSAIKAPVAV.

DUMP contacts are provided by residues Arg25 and 180–181 (RR). The active-site Nucleophile is Cys200. Residues 220–223 (RSAD), Asn231, and 261–263 (HIY) contribute to the dUMP site. Asp223 contacts (6R)-5,10-methylene-5,6,7,8-tetrahydrofolate. (6R)-5,10-methylene-5,6,7,8-tetrahydrofolate is bound at residue Ala317.

Belongs to the thymidylate synthase family. Bacterial-type ThyA subfamily. In terms of assembly, homodimer.

It localises to the cytoplasm. The catalysed reaction is dUMP + (6R)-5,10-methylene-5,6,7,8-tetrahydrofolate = 7,8-dihydrofolate + dTMP. It functions in the pathway pyrimidine metabolism; dTTP biosynthesis. Its function is as follows. Catalyzes the reductive methylation of 2'-deoxyuridine-5'-monophosphate (dUMP) to 2'-deoxythymidine-5'-monophosphate (dTMP) while utilizing 5,10-methylenetetrahydrofolate (mTHF) as the methyl donor and reductant in the reaction, yielding dihydrofolate (DHF) as a by-product. This enzymatic reaction provides an intracellular de novo source of dTMP, an essential precursor for DNA biosynthesis. This chain is Thymidylate synthase, found in Ligilactobacillus salivarius (strain UCC118) (Lactobacillus salivarius).